The sequence spans 148 residues: Large ribosomal subunit protein bL9 (148 aa).

This sequence belongs to the bacterial ribosomal protein bL9 family.

In terms of biological role, binds to the 23S rRNA. The chain is Large ribosomal subunit protein bL9 from Lachnoclostridium phytofermentans (strain ATCC 700394 / DSM 18823 / ISDg) (Clostridium phytofermentans).